The following is a 584-amino-acid chain: ATP-dependent lipid A-core flippase 2 (584 aa).

6 consecutive transmembrane segments (helical) span residues 32-52 (IFIA…MIYF), 68-88 (TLQL…IASF), 146-166 (SAVV…SMMV), 167-187 (YNSW…ALII), 254-274 (AISN…VLLL), and 280-300 (VLNQ…GSLL). In terms of domain architecture, ABC transmembrane type-1 spans 33 to 315 (FIALAGLCLF…LSNINQQLQK (283 aa)). In terms of domain architecture, ABC transporter spans 347–583 (IRFNNFSFTY…AGYYQSLYQS (237 aa)). An ATP-binding site is contributed by 381–388 (GESGSGKS).

Belongs to the ABC transporter superfamily. Lipid exporter (TC 3.A.1.106) family. As to quaternary structure, homodimer.

The protein resides in the cell inner membrane. It catalyses the reaction ATP + H2O + lipid A-core oligosaccharideSide 1 = ADP + phosphate + lipid A-core oligosaccharideSide 2.. Involved in lipopolysaccharide (LPS) biosynthesis. Translocates lipid A-core from the inner to the outer leaflet of the inner membrane. Transmembrane domains (TMD) form a pore in the inner membrane and the ATP-binding domain (NBD) is responsible for energy generation. The sequence is that of ATP-dependent lipid A-core flippase 2 from Colwellia psychrerythraea (strain 34H / ATCC BAA-681) (Vibrio psychroerythus).